Here is a 144-residue protein sequence, read N- to C-terminus: tRNA-specific adenosine deaminase (144 aa).

In terms of domain architecture, CMP/dCMP-type deaminase spans 1 to 116; the sequence is MEQALKQAGI…SNLRYFNSSV (116 aa). H48 serves as a coordination point for Zn(2+). E50 functions as the Proton donor in the catalytic mechanism. Zn(2+) contacts are provided by C78 and C81.

Belongs to the cytidine and deoxycytidylate deaminase family. As to quaternary structure, homodimer. The cofactor is Zn(2+).

It catalyses the reaction adenosine(34) in tRNA + H2O + H(+) = inosine(34) in tRNA + NH4(+). Its function is as follows. Catalyzes the deamination of adenosine to inosine at the wobble position 34 of tRNA(Arg2). This is tRNA-specific adenosine deaminase from Rickettsia felis (strain ATCC VR-1525 / URRWXCal2) (Rickettsia azadi).